A 489-amino-acid polypeptide reads, in one-letter code: Betaine aldehyde dehydrogenase (489 aa).

Asparagine 93 serves as a coordination point for K(+). Residue 150-152 coordinates NAD(+); it reads GAW. The active-site Charge relay system is lysine 162. 176-179 is a binding site for NAD(+); sequence KPSE. K(+) is bound at residue valine 180. Residue 229 to 232 participates in NAD(+) binding; the sequence is EVGT. Leucine 245 lines the K(+) pocket. The Proton acceptor role is filled by glutamate 251. 3 residues coordinate NAD(+): glycine 253, cysteine 285, and glutamate 386. Residue cysteine 285 is the Nucleophile of the active site. Cysteine 285 bears the Cysteine sulfenic acid (-SOH) mark. K(+)-binding residues include lysine 456 and glycine 459. Residue glutamate 463 is the Charge relay system of the active site.

This sequence belongs to the aldehyde dehydrogenase family. As to quaternary structure, dimer of dimers. The cofactor is K(+).

The enzyme catalyses betaine aldehyde + NAD(+) + H2O = glycine betaine + NADH + 2 H(+). It functions in the pathway amine and polyamine biosynthesis; betaine biosynthesis via choline pathway; betaine from betaine aldehyde: step 1/1. Involved in the biosynthesis of the osmoprotectant glycine betaine. Catalyzes the irreversible oxidation of betaine aldehyde to the corresponding acid. The chain is Betaine aldehyde dehydrogenase from Chromohalobacter salexigens (strain ATCC BAA-138 / DSM 3043 / CIP 106854 / NCIMB 13768 / 1H11).